The chain runs to 137 residues: Large ribosomal subunit protein uL16c (137 aa).

This sequence belongs to the universal ribosomal protein uL16 family. Part of the 50S ribosomal subunit.

The protein resides in the plastid. This Cuscuta exaltata (Tall dodder) protein is Large ribosomal subunit protein uL16c.